Consider the following 261-residue polypeptide: Thiazole synthase (261 aa).

The active-site Schiff-base intermediate with DXP is the Lys102. 1-deoxy-D-xylulose 5-phosphate is bound by residues Gly163, 189–190 (AG), and 211–212 (NT).

Belongs to the ThiG family. In terms of assembly, homotetramer. Forms heterodimers with either ThiH or ThiS.

It localises to the cytoplasm. The catalysed reaction is [ThiS sulfur-carrier protein]-C-terminal-Gly-aminoethanethioate + 2-iminoacetate + 1-deoxy-D-xylulose 5-phosphate = [ThiS sulfur-carrier protein]-C-terminal Gly-Gly + 2-[(2R,5Z)-2-carboxy-4-methylthiazol-5(2H)-ylidene]ethyl phosphate + 2 H2O + H(+). It participates in cofactor biosynthesis; thiamine diphosphate biosynthesis. In terms of biological role, catalyzes the rearrangement of 1-deoxy-D-xylulose 5-phosphate (DXP) to produce the thiazole phosphate moiety of thiamine. Sulfur is provided by the thiocarboxylate moiety of the carrier protein ThiS. In vitro, sulfur can be provided by H(2)S. This Acinetobacter baumannii (strain AB307-0294) protein is Thiazole synthase.